Consider the following 364-residue polypeptide: Dihydroorotate dehydrogenase (quinone) (364 aa).

Residues 61 to 65 (AGFDK) and T85 contribute to the FMN site. Substrate is bound at residue K65. 110 to 114 (NRMGF) serves as a coordination point for substrate. FMN-binding residues include N139 and N170. N170 provides a ligand contact to substrate. The active-site Nucleophile is the S173. N175 contacts substrate. Positions 214 and 242 each coordinate FMN. 243–244 (NT) contributes to the substrate binding site. FMN-binding positions include G266, G295, and 316–317 (YS).

It belongs to the dihydroorotate dehydrogenase family. Type 2 subfamily. Monomer. FMN serves as cofactor.

The protein localises to the cell membrane. The enzyme catalyses (S)-dihydroorotate + a quinone = orotate + a quinol. It participates in pyrimidine metabolism; UMP biosynthesis via de novo pathway; orotate from (S)-dihydroorotate (quinone route): step 1/1. Functionally, catalyzes the conversion of dihydroorotate to orotate with quinone as electron acceptor. The protein is Dihydroorotate dehydrogenase (quinone) of Rhodopseudomonas palustris (strain ATCC BAA-98 / CGA009).